The chain runs to 153 residues: Transcriptional repressor NrdR (153 aa).

The segment at 3–34 (CPSCQHHGTRVLDSRPVDEGRSIRRRRECEQC) is a zinc-finger region. The ATP-cone domain occupies 49–139 (LIVVKKQGMR…VYRQFKDLNV (91 aa)).

This sequence belongs to the NrdR family. The cofactor is Zn(2+).

Negatively regulates transcription of bacterial ribonucleotide reductase nrd genes and operons by binding to NrdR-boxes. The chain is Transcriptional repressor NrdR from Geobacillus sp. (strain WCH70).